Reading from the N-terminus, the 587-residue chain is Ran GTPase-activating protein 1 (587 aa).

A2 carries the post-translational modification N-acetylalanine. A Glycyl lysine isopeptide (Lys-Gly) (interchain with G-Cter in SUMO1); alternate cross-link involves residue K8. A Glycyl lysine isopeptide (Lys-Gly) (interchain with G-Cter in SUMO2); alternate cross-link involves residue K8. Residue K15 forms a Glycyl lysine isopeptide (Lys-Gly) (interchain with G-Cter in SUMO2) linkage. Residue S24 is modified to Phosphoserine. LRR repeat units follow at residues 48–71 (FDSL…VIAK), 111–134 (GAQL…GFEA), 207–230 (IGTL…ALAQ), and 235–258 (NPLL…AMAE). K279 participates in a covalent cross-link: Glycyl lysine isopeptide (Lys-Gly) (interchain with G-Cter in SUMO2). LRR repeat units follow at residues 292-319 (LPKL…AMAD) and 320-343 (KAEL…QLQE). S301 bears the Phosphoserine mark. Residues 357 to 430 (LSDDEDEEEE…EPAPVLSSPP (74 aa)) form a disordered region. Position 358 is a phosphoserine (S358). Residues 358–397 (SDDEDEEEEEEGEEEEEEAEEEEEEDEEEEEEEEEEEEEE) show a composition bias toward acidic residues. Over residues 400-410 (QRGQGEKSATP) the composition is skewed to polar residues. Position 409 is a phosphothreonine; by CDK2 (T409). A phosphoserine mark is found at S428 and S435. T436 bears the Phosphothreonine mark. S442 carries the post-translational modification Phosphoserine. A Glycyl lysine isopeptide (Lys-Gly) (interchain with G-Cter in SUMO2) cross-link involves residue K452. The SUMO conjugation motif lies at 523–526 (LKSE). K524 participates in a covalent cross-link: Glycyl lysine isopeptide (Lys-Gly) (interchain with G-Cter in SUMO1); alternate. A Glycyl lysine isopeptide (Lys-Gly) (interchain with G-Cter in SUMO2); alternate cross-link involves residue K524. Position 524 is an N6-acetyllysine; alternate (K524). Residue K586 forms a Glycyl lysine isopeptide (Lys-Gly) (interchain with G-Cter in SUMO2) linkage.

The protein belongs to the RNA1 family. As to quaternary structure, homodimer. Interacts with RAN. Forms a complex with RANBP2/NUP358, NXF1 and NXT1. Forms a tight complex in association with RANBP2/NUP358 and UBE2I/UBC9, the ubiquitin-conjugating enzyme E2. Interacts with UBE2I; the interaction conjugates SUMO1 to RANGAP1, and subsequently stabilizes interactions of sumoylated RANGAP1 with RANBP2/NUP358. The complex composed of RANBP2, SUMO1, RANGAP1 and UBE2I associates with nuclear pore complexes. Identified in a complex composed of RAN, RANBP2, sumoylated RANGAP1, UBE2I and XPO1. Identified in a complex composed of RAN, RANGAP1 and RANBP1. Interacts with TRAF6. Interacts with SUMO1 and SENP1. Interacts (when sumoylated) with MYCBP2; interaction inhibits MYCBP2 E3 ubiquitin-protein ligase activity and promotes MYCBP2 translocation to the nucleus. In terms of processing, phosphorylation occurs before nuclear envelope breakdown and continues throughout mitosis. Phosphorylated by the M-phase kinase cyclin B/Cdk1, in vitro. Differential timimg of dephosphorylation occurs during phases of mitosis. The phosphorylated form remains associated with RANBP2/NUP358 and the SUMO E2-conjugating enzyme, UBE2I, on nuclear pore complex (NPC) diassembly and during mitosis. Post-translationally, sumoylated. Sumoylation is necessary for targeting to the nuclear envelope (NE), and for association with mitotic spindles and kinetochores during mitosis. Also required for interaction with RANBP2 and is mediated by UBE2I. Desumoylated by HINT1. As to expression, highly expressed in brain, thymus and testis.

Its subcellular location is the cytoplasm. The protein resides in the nucleus. It localises to the nucleoplasm. The protein localises to the nucleus envelope. It is found in the chromosome. Its subcellular location is the centromere. The protein resides in the kinetochore. It localises to the cytoskeleton. The protein localises to the spindle. GTPase activator for RAN. Converts cytoplasmic GTP-bound RAN to GDP-bound RAN, which is essential for RAN-mediated nuclear import and export. Mediates dissociation of cargo from nuclear export complexes containing XPO1, RAN and RANBP2 after nuclear export. The polypeptide is Ran GTPase-activating protein 1 (RANGAP1) (Homo sapiens (Human)).